The sequence spans 1804 residues: Collagen alpha-1(XI) chain (1804 aa).

Residues 1-34 (MEPWSRWKTKRWIWDLTISTLALTFLFQAREVRG) form the signal peptide. Residues 35–511 (AAPVDILKAL…SKGPTISAQE (477 aa)) constitute a propeptide, N-terminal propeptide. 2 cysteine pairs are disulfide-bonded: Cys-60–Cys-242 and Cys-181–Cys-235. Residues 70 to 242 (DVAYRVTEEA…DYCDHYSPDC (173 aa)) enclose the Laminin G-like domain. The segment at 229–417 (KAAYDYCDHY…DFTETSINGH (189 aa)) is nonhelical region. Positions 315-329 (YQTETPRRVSGSNEP) are enriched in polar residues. Disordered regions lie at residues 315 to 334 (YQTE…PVEE) and 433 to 506 (EPGM…KGPT). A triple-helical region (interrupted) region spans residues 418–506 (GAYGEKGQKG…YGGDGSKGPT (89 aa)). A Collagen-like 1 domain is found at 440-488 (GPPGPAGPAGLMGPPGLQGPSGLPGDPGDRGPPGRPGLPGADGLPGPPG). Composition is skewed to low complexity over residues 447 to 465 (PAGL…LPGD) and 477 to 494 (LPGA…LMLP). The tract at residues 507–509 (ISA) is short nonhelical segment. The interval 510–527 (QEAQAQAILQQARIALRG) is telopeptide. Positions 526–1567 (RGPPGPMGLT…SIQGDAGDNI (1042 aa)) are disordered. Collagen-like domains are found at residues 527–584 (GPPG…GADG) and 567–623 (PPGP…GPPG). The interval 528–1540 (PPGPMGLTGR…PGPPGPPGEV (1013 aa)) is triple-helical region. Composition is skewed to gly residues over residues 539–548 (GPVGGPGSAG) and 581–590 (GADGGRGMPG). Lys-610 is subject to Allysine. Residues 639 to 655 (PRGLPGEAGPRGLLGPR) show a composition bias toward low complexity. A compositionally biased stretch (pro residues) spans 697–708 (QGLPGPQGPIGP). Positions 715-726 (QGKPGLAGLPGA) are enriched in low complexity. A Collagen-like 4 domain is found at 728-781 (GPPGHPGKEGQSGEKGALGPPGPQGPIGYPGPRGVKGADGVRGLKGSKGEKGED). Basic and acidic residues predominate over residues 805–814 (RGEDGPEGPK). 3 stretches are compositionally biased toward low complexity: residues 873–901 (KPGP…PGPK), 916–925 (RGPQGPQGPV), and 969–979 (PQGPTGETGPI). Over residues 1040–1049 (GLKGGEGPQG) the composition is skewed to gly residues. Over residues 1074–1083 (RPGPQGPPGP) the composition is skewed to pro residues. The segment covering 1084–1108 (AGEKGAPGEKGPQGPAGRDGVQGPV) has biased composition (low complexity). A compositionally biased stretch (gly residues) spans 1160-1169 (GIAGGDGEPG). The span at 1216 to 1227 (MGPPGPPGPRGP) shows a compositional bias: pro residues. Low complexity-rich tracts occupy residues 1240-1249 (PGSIGSVGVV) and 1282-1296 (AGPP…IKGP). Residues 1341 to 1360 (QPGPPGPSGEAGPPGPPGKR) show a composition bias toward pro residues. Composition is skewed to low complexity over residues 1383 to 1392 (AEGPPGKTGP) and 1417 to 1426 (QGLPGAAGQD). Collagen-like domains lie at 1427 to 1482 (GPPG…SPGA) and 1481 to 1539 (GAKG…PPGE). Residues 1428 to 1437 (PPGPLGPPGL) are compositionally biased toward pro residues. Lys-1450 bears the Allysine mark. The segment covering 1453-1462 (PGLIGLIGPP) has biased composition (low complexity). The span at 1481 to 1490 (GAKGDGGIPG) shows a compositional bias: gly residues. Residues 1491 to 1507 (PAGPIGPPGPPGLPGPA) are compositionally biased toward pro residues. Residues 1509–1519 (PKGNKGSSGPT) show a composition bias toward low complexity. Positions 1528-1537 (PGPPGPPGPP) are enriched in pro residues. Positions 1541–1561 (IQPLPILSPKKTRRHTESIQG) are nonhelical region (C-terminal). Residues 1562–1804 (DAGDNILDYS…FEVGPACFLG (243 aa)) constitute a propeptide, C-terminal propeptide. A Fibrillar collagen NC1 domain is found at 1575 to 1803 (EEIFGSLNSL…GFEVGPACFL (229 aa)). Residues Cys-1605 and Cys-1637 are joined by a disulfide bond. Positions 1623, 1625, 1626, 1628, and 1631 each coordinate Ca(2+). Asn-1638 is a glycosylation site (N-linked (GlcNAc...) asparagine). 2 disulfides stabilise this stretch: Cys-1646–Cys-1801 and Cys-1712–Cys-1755.

The protein belongs to the fibrillar collagen family. As to quaternary structure, trimers composed of three different chains: alpha 1(XI), alpha 2(XI), and alpha 3(XI). Alpha 3(XI) is a post-translational modification of alpha 1(II). Alpha 1(V) can also be found instead of alpha 3(XI)=1(II). In terms of processing, prolines at the third position of the tripeptide repeating unit (G-X-Y) are hydroxylated in some or all of the chains. Post-translationally, N-glycosylated.

The protein localises to the secreted. It localises to the extracellular space. It is found in the extracellular matrix. Its function is as follows. May play an important role in fibrillogenesis by controlling lateral growth of collagen II fibrils. This is Collagen alpha-1(XI) chain (Col11a1) from Mus musculus (Mouse).